The primary structure comprises 180 residues: Large ribosomal subunit protein uL5 (180 aa).

This sequence belongs to the universal ribosomal protein uL5 family. Part of the 50S ribosomal subunit; part of the 5S rRNA/L5/L18/L25 subcomplex. Contacts the 5S rRNA and the P site tRNA. Forms a bridge to the 30S subunit in the 70S ribosome.

This is one of the proteins that bind and probably mediate the attachment of the 5S RNA into the large ribosomal subunit, where it forms part of the central protuberance. In the 70S ribosome it contacts protein S13 of the 30S subunit (bridge B1b), connecting the 2 subunits; this bridge is implicated in subunit movement. Contacts the P site tRNA; the 5S rRNA and some of its associated proteins might help stabilize positioning of ribosome-bound tRNAs. This Chloroflexus aggregans (strain MD-66 / DSM 9485) protein is Large ribosomal subunit protein uL5.